A 957-amino-acid polypeptide reads, in one-letter code: UvrABC system protein A (957 aa).

ATP is bound at residue 33–40; it reads GLSGSGKS. The C4-type zinc-finger motif lies at 252–279; sequence CPHCGFSIGELEPRLFSFNSPFGACPTC. 2 consecutive ABC transporter domains span residues 309-587 and 607-935; these read WTPI…PNSL and PDGR…RYLK. 639 to 646 is a binding site for ATP; that stretch reads GVSGSGKS. The C4-type zinc finger occupies 738–764; it reads CEACRGDGIIKIEMHFLPDVYVPCEVC.

The protein belongs to the ABC transporter superfamily. UvrA family. As to quaternary structure, forms a heterotetramer with UvrB during the search for lesions.

Its subcellular location is the cytoplasm. The UvrABC repair system catalyzes the recognition and processing of DNA lesions. UvrA is an ATPase and a DNA-binding protein. A damage recognition complex composed of 2 UvrA and 2 UvrB subunits scans DNA for abnormalities. When the presence of a lesion has been verified by UvrB, the UvrA molecules dissociate. In Bacillus subtilis (strain 168), this protein is UvrABC system protein A.